A 392-amino-acid polypeptide reads, in one-letter code: Phosphoglycerate kinase (392 aa).

Substrate-binding positions include 21–23, R36, 59–62, R117, and R150; these read DFN and HLGR. Residues K200, G288, E319, and 345 to 348 each bind ATP; that span reads GGDS.

Belongs to the phosphoglycerate kinase family. Monomer.

It is found in the cytoplasm. It catalyses the reaction (2R)-3-phosphoglycerate + ATP = (2R)-3-phospho-glyceroyl phosphate + ADP. Its pathway is carbohydrate degradation; glycolysis; pyruvate from D-glyceraldehyde 3-phosphate: step 2/5. This chain is Phosphoglycerate kinase, found in Rubrobacter xylanophilus (strain DSM 9941 / JCM 11954 / NBRC 16129 / PRD-1).